Consider the following 305-residue polypeptide: DNA-directed RNA polymerase 35 kDa subunit (305 aa).

The protein belongs to the poxviridae DNA-directed RNA polymerase 35 kDa subunit family. As to quaternary structure, the DNA-dependent RNA polymerase used for intermediate and late genes expression consists of eight subunits 147 kDa, 133 kDa, 35 kDa, 30 kDa, 22 kDa, 19 kDa, 18 kDa and 7 kDa totalling more than 500 kDa in mass. The same holoenzyme, with the addition of the transcription-specificity factor RAP94, is used for early gene expression.

It localises to the virion. The catalysed reaction is RNA(n) + a ribonucleoside 5'-triphosphate = RNA(n+1) + diphosphate. Its function is as follows. Part of the DNA-dependent RNA polymerase which catalyzes the transcription of viral DNA into RNA using the four ribonucleoside triphosphates as substrates. Responsible for the transcription of early, intermediate and late genes. DNA-dependent RNA polymerase associates with the early transcription factor (ETF), itself composed of D6 and A7, thereby allowing the early genes transcription. Late transcription, and probably also intermediate transcription, require newly synthesized RNA polymerase. The polypeptide is DNA-directed RNA polymerase 35 kDa subunit (OPG156) (Bos taurus (Bovine)).